Reading from the N-terminus, the 650-residue chain is Kinesin-like protein KIF22-B (650 aa).

The Kinesin motor domain occupies R31 to I359. G116–T123 provides a ligand contact to ATP. Positions S365–K416 are disordered. Residues T401–S411 are compositionally biased toward low complexity. Residues K452–L498 adopt a coiled-coil conformation. Positions G560–N563 match the Important for regulated proteolytic degradation motif.

Belongs to the TRAFAC class myosin-kinesin ATPase superfamily. Kinesin family. Ubiquitinated, leading to its subsequent proteasomal degradation.

Its subcellular location is the nucleus. It is found in the cytoplasm. The protein localises to the cytoskeleton. Functionally, kinesin family member that is involved in spindle formation and the movements of chromosomes during mitosis and meiosis. Binds to microtubules and to DNA. The chain is Kinesin-like protein KIF22-B (kif22-b) from Xenopus laevis (African clawed frog).